Here is a 556-residue protein sequence, read N- to C-terminus: PTS system fructose-specific EIIB'BC component (556 aa).

PTS EIIB type-2 domains follow at residues 1-85 and 106-201; these read MKLF…LANG and IVAV…KAFK. Residue C112 is the Phosphocysteine intermediate; for EIIB activity of the active site. Position 112 is a phosphocysteine; by EIIA (C112). The PTS EIIC type-2 domain occupies 224-556; the sequence is VYKHLMTGVS…AIIKSKNNAE (333 aa). 10 helical membrane-spanning segments follow: residues 237-257, 275-295, 302-322, 324-344, 349-369, 390-410, 431-451, 468-488, 490-510, and 529-549; these read PLVVAGGLLIAISFMFSFNVI, SGVAFKLMIAVFAGYVAFSIA, VGLIAGMLASEAGAGILGGII, GFLAGYVVKGLNVIIRLPASL, PILILPLLGSMIVGLTMIYLI, VNAIVLGAIIGAMMCIDMGGP, MAAAMAAGMVPPIGMTVATWI, FVLGLCFISEGALPFVAADPI, VIISSVIGGAVAGAISMGLNI, and LKYLGAIAIGALSTGVVYAII.

The protein localises to the cell inner membrane. It catalyses the reaction D-fructose(out) + N(pros)-phospho-L-histidyl-[protein] = D-fructose 1-phosphate(in) + L-histidyl-[protein]. The phosphoenolpyruvate-dependent sugar phosphotransferase system (sugar PTS), a major carbohydrate active transport system, catalyzes the phosphorylation of incoming sugar substrates concomitantly with their translocation across the cell membrane. The enzyme II FruAB PTS system is involved in fructose transport. This chain is PTS system fructose-specific EIIB'BC component, found in Haemophilus influenzae (strain ATCC 51907 / DSM 11121 / KW20 / Rd).